The primary structure comprises 388 residues: Succinate--CoA ligase [ADP-forming] subunit beta (388 aa).

One can recognise an ATP-grasp domain in the interval 9 to 244 (KEIFRSMGVA…LEEEDPKEIE (236 aa)). ATP is bound by residues lysine 46, 53–55 (GRG), glutamate 99, cysteine 102, and glutamate 107. Mg(2+) contacts are provided by asparagine 199 and aspartate 213. Substrate is bound by residues asparagine 264 and 321 to 323 (GIM).

This sequence belongs to the succinate/malate CoA ligase beta subunit family. Heterotetramer of two alpha and two beta subunits. Mg(2+) is required as a cofactor.

The enzyme catalyses succinate + ATP + CoA = succinyl-CoA + ADP + phosphate. It carries out the reaction GTP + succinate + CoA = succinyl-CoA + GDP + phosphate. Its pathway is carbohydrate metabolism; tricarboxylic acid cycle; succinate from succinyl-CoA (ligase route): step 1/1. Its function is as follows. Succinyl-CoA synthetase functions in the citric acid cycle (TCA), coupling the hydrolysis of succinyl-CoA to the synthesis of either ATP or GTP and thus represents the only step of substrate-level phosphorylation in the TCA. The beta subunit provides nucleotide specificity of the enzyme and binds the substrate succinate, while the binding sites for coenzyme A and phosphate are found in the alpha subunit. This chain is Succinate--CoA ligase [ADP-forming] subunit beta, found in Staphylococcus aureus (strain MRSA252).